A 184-amino-acid polypeptide reads, in one-letter code: Probable chemoreceptor glutamine deamidase CheD (184 aa).

The protein belongs to the CheD family.

The catalysed reaction is L-glutaminyl-[protein] + H2O = L-glutamyl-[protein] + NH4(+). Functionally, probably deamidates glutamine residues to glutamate on methyl-accepting chemotaxis receptors (MCPs), playing an important role in chemotaxis. This is Probable chemoreceptor glutamine deamidase CheD from Rhizobium johnstonii (strain DSM 114642 / LMG 32736 / 3841) (Rhizobium leguminosarum bv. viciae).